Here is a 1891-residue protein sequence, read N- to C-terminus: Protein TIC 214 (1891 aa).

The next 6 membrane-spanning stretches (helical) occupy residues 18–38 (IINSVVVVGLYYGFLTTFSIG), 64–84 (FITGQLMMFISIYYAPLHLAL), 87–107 (PHTITVLALPYLLFHFFWNNH), 124–144 (LSIQCVFLNNLIFQLFNHFIL), 172–192 (VGWLIGHILFMKWLGLVLVWI), and 221–241 (IFSILLFITCVYYLGRIPSPI). 3 disordered regions span residues 248–300 (EASK…EGWD), 788–807 (EEQTKREEKKEKDKKEDNKR), and 1580–1607 (KNRSQEAKEPPSQRERGSDIENKGNLSP). Residues 256–268 (VESEEERDVEIET) show a composition bias toward acidic residues. The segment covering 1582–1601 (RSQEAKEPPSQRERGSDIEN) has biased composition (basic and acidic residues).

The protein belongs to the TIC214 family. Part of the Tic complex.

It localises to the plastid. Its subcellular location is the chloroplast inner membrane. Functionally, involved in protein precursor import into chloroplasts. May be part of an intermediate translocation complex acting as a protein-conducting channel at the inner envelope. The protein is Protein TIC 214 of Solanum lycopersicum (Tomato).